Reading from the N-terminus, the 159-residue chain is Eukaryotic translation initiation factor 5A-2 (159 aa).

Residues 1 to 10 show a composition bias toward basic and acidic residues; it reads MSDDEHHFEA. A disordered region spans residues 1–25; sequence MSDDEHHFEASESGASKTYPQSAGN. S2 carries the phosphoserine modification. Residues 13-24 show a composition bias toward polar residues; it reads SGASKTYPQSAG. K51 is modified (hypusine).

It belongs to the eIF-5A family. In terms of assembly, homodimer. Interacts with AHK4 and AHP1. Cytokinin regulates the formation of the AHP1-AHK4-ELF5A-2 complex. Post-translationally, lys-51 undergoes hypusination, a unique post-translational modification that consists in the addition of a butylamino group from spermidine to lysine side chain, leading to the formation of the unusual amino acid hypusine. eIF-5As are the only known proteins to undergo this modification, which is essential for their function. In terms of tissue distribution, ubiquitous. In roots, expressed mostly inside the stele of the mature zone.

It is found in the cytoplasm. The protein resides in the nucleus. Its function is as follows. Translation factor that promotes translation elongation and termination, particularly upon ribosome stalling at specific amino acid sequence contexts. Binds between the exit (E) and peptidyl (P) site of the ribosome and promotes rescue of stalled ribosome: specifically required for efficient translation of polyproline-containing peptides as well as other motifs that stall the ribosome. Acts as a ribosome quality control (RQC) cofactor by joining the RQC complex to facilitate peptidyl transfer during CAT tailing step. Regulates cytokinin-mediated root protoxylem specification and represses secifically the expression of AHP6. Regulates the induction of programmed cell death caused by infection with virulent pathogen. The protein is Eukaryotic translation initiation factor 5A-2 (ELF5A-2) of Arabidopsis thaliana (Mouse-ear cress).